Here is a 361-residue protein sequence, read N- to C-terminus: Chorismate synthase (361 aa).

NADP(+) is bound at residue R48. FMN contacts are provided by residues 126–128, G286, 301–305, and R328; these read RFS and KPTPS.

It belongs to the chorismate synthase family. FMNH2 serves as cofactor.

The enzyme catalyses 5-O-(1-carboxyvinyl)-3-phosphoshikimate = chorismate + phosphate. The protein operates within metabolic intermediate biosynthesis; chorismate biosynthesis; chorismate from D-erythrose 4-phosphate and phosphoenolpyruvate: step 7/7. Its function is as follows. Catalyzes the anti-1,4-elimination of the C-3 phosphate and the C-6 proR hydrogen from 5-enolpyruvylshikimate-3-phosphate (EPSP) to yield chorismate, which is the branch point compound that serves as the starting substrate for the three terminal pathways of aromatic amino acid biosynthesis. This reaction introduces a second double bond into the aromatic ring system. This is Chorismate synthase from Korarchaeum cryptofilum (strain OPF8).